Consider the following 282-residue polypeptide: Dihydropteroate synthase (282 aa).

Residues 15–267 enclose the Pterin-binding domain; it reads PHVMGILNVT…DVKETVEAMR (253 aa). Residue Asn-22 coordinates Mg(2+). (7,8-dihydropterin-6-yl)methyl diphosphate contacts are provided by residues Thr-62, Asp-96, Asn-115, Asp-185, Lys-221, and 255 to 257; that span reads RVH.

It belongs to the DHPS family. As to quaternary structure, homodimer. Mg(2+) serves as cofactor.

The catalysed reaction is (7,8-dihydropterin-6-yl)methyl diphosphate + 4-aminobenzoate = 7,8-dihydropteroate + diphosphate. It participates in cofactor biosynthesis; tetrahydrofolate biosynthesis; 7,8-dihydrofolate from 2-amino-4-hydroxy-6-hydroxymethyl-7,8-dihydropteridine diphosphate and 4-aminobenzoate: step 1/2. Functionally, catalyzes the condensation of para-aminobenzoate (pABA) with 6-hydroxymethyl-7,8-dihydropterin diphosphate (DHPt-PP) to form 7,8-dihydropteroate (H2Pte), the immediate precursor of folate derivatives. The protein is Dihydropteroate synthase (folP) of Shigella flexneri.